The chain runs to 98 residues: Integration host factor subunit beta (98 aa).

Belongs to the bacterial histone-like protein family. As to quaternary structure, heterodimer of an alpha and a beta chain.

Its function is as follows. This protein is one of the two subunits of integration host factor, a specific DNA-binding protein that functions in genetic recombination as well as in transcriptional and translational control. The chain is Integration host factor subunit beta from Hahella chejuensis (strain KCTC 2396).